Reading from the N-terminus, the 370-residue chain is Histidinol-phosphate aminotransferase 1 (370 aa).

An N6-(pyridoxal phosphate)lysine modification is found at lysine 222.

The protein belongs to the class-II pyridoxal-phosphate-dependent aminotransferase family. Histidinol-phosphate aminotransferase subfamily. In terms of assembly, homodimer. Pyridoxal 5'-phosphate is required as a cofactor.

It catalyses the reaction L-histidinol phosphate + 2-oxoglutarate = 3-(imidazol-4-yl)-2-oxopropyl phosphate + L-glutamate. Its pathway is amino-acid biosynthesis; L-histidine biosynthesis; L-histidine from 5-phospho-alpha-D-ribose 1-diphosphate: step 7/9. The protein is Histidinol-phosphate aminotransferase 1 of Bacillus cereus (strain ZK / E33L).